Consider the following 355-residue polypeptide: MIRSLNFALRNCNKNILINSNKITINNGLLLKKNNFCTQSTSEVKVPTELVVQLRKKTQSPVQECKKALQASNNDMDGAIKWLLEKGKATAEKLKSRVSAEGIISVLVDSGSGKAVILEMNSETDFVSRGDIFRNLARDISKATLSNPISGGKLAENGILELDPTQVENIYPIKINITNEDGVAEEMTIKDSIVRIVSKLRENIVIRRASFIQPLNNNNNNSKSYISSYAHDSTSEKKDVGRLGSIVQFEYQGDCNNMNSLKEFANQLAIHIVSNSPSVVTVNDIPSSVLEECKNNNKNPESLYDDMVLYEQSYMYSPDHSVKQYLEILSEKLGIKNLSVKTFRRYAIGETAERV.

The N-terminal 46 residues, 1–46 (MIRSLNFALRNCNKNILINSNKITINNGLLLKKNNFCTQSTSEVKV), are a transit peptide targeting the mitochondrion.

This sequence belongs to the EF-Ts family.

It is found in the mitochondrion. Its function is as follows. Associates with the EF-Tu.GDP complex and induces the exchange of GDP to GTP. It remains bound to the aminoacyl-tRNA.EF-Tu.GTP complex up to the GTP hydrolysis stage on the ribosome. The chain is Elongation factor Ts, mitochondrial (tsfm) from Dictyostelium discoideum (Social amoeba).